Reading from the N-terminus, the 181-residue chain is NADH-quinone oxidoreductase subunit B 2 (181 aa).

[4Fe-4S] cluster is bound by residues Cys44, Cys45, Cys110, and Cys139.

This sequence belongs to the complex I 20 kDa subunit family. As to quaternary structure, NDH-1 is composed of 14 different subunits. Subunits NuoB, C, D, E, F, and G constitute the peripheral sector of the complex. [4Fe-4S] cluster serves as cofactor.

Its subcellular location is the cell inner membrane. It catalyses the reaction a quinone + NADH + 5 H(+)(in) = a quinol + NAD(+) + 4 H(+)(out). NDH-1 shuttles electrons from NADH, via FMN and iron-sulfur (Fe-S) centers, to quinones in the respiratory chain. The immediate electron acceptor for the enzyme in this species is believed to be a menaquinone. Couples the redox reaction to proton translocation (for every two electrons transferred, four hydrogen ions are translocated across the cytoplasmic membrane), and thus conserves the redox energy in a proton gradient. In Cytophaga hutchinsonii (strain ATCC 33406 / DSM 1761 / CIP 103989 / NBRC 15051 / NCIMB 9469 / D465), this protein is NADH-quinone oxidoreductase subunit B 2.